We begin with the raw amino-acid sequence, 367 residues long: tRNA uridine(34) hydroxylase (367 aa).

In terms of domain architecture, Rhodanese spans 159–249 (EDKNSIVVDV…GIISYAHEIS (91 aa)). Cys213 functions as the Cysteine persulfide intermediate in the catalytic mechanism.

It belongs to the TrhO family.

It catalyses the reaction uridine(34) in tRNA + AH2 + O2 = 5-hydroxyuridine(34) in tRNA + A + H2O. Functionally, catalyzes oxygen-dependent 5-hydroxyuridine (ho5U) modification at position 34 in tRNAs. In Leptospira borgpetersenii serovar Hardjo-bovis (strain L550), this protein is tRNA uridine(34) hydroxylase.